Consider the following 649-residue polypeptide: Protein arginine N-methyltransferase 5 (649 aa).

A TIM barrel region spans residues 10–300; that stretch reads KSESRYCGVE…SPYLDYIAYI (291 aa). Residues 321–627 form the SAM-dependent MTase PRMT-type domain; sequence LQSPLQPLMD…CGATKVWYEW (307 aa). Tyrosine 337 is an S-adenosyl-L-methionine binding site. A protein is bound at residue phenylalanine 340. Residues 346-347, glutamate 405, and 433-434 each bind S-adenosyl-L-methionine; these read KY and DM. The a protein site is built by glutamate 449 and glutamate 458. Catalysis depends on proton donor/acceptor residues glutamate 449 and glutamate 458. The tract at residues 479–649 is beta barrel; that stretch reads PSSYTSFIEP…SNGRSYWVGL (171 aa). The interval 491 to 507 is dimerization; the sequence is ASKLHNDIKAHKDIAHF.

The protein belongs to the class I-like SAM-binding methyltransferase superfamily. Protein arginine N-methyltransferase family.

It localises to the cytoplasm. The catalysed reaction is L-arginyl-[protein] + 2 S-adenosyl-L-methionine = N(omega),N(omega)'-dimethyl-L-arginyl-[protein] + 2 S-adenosyl-L-homocysteine + 2 H(+). Methylates arginine residues in proteins such as histone H4. This chain is Protein arginine N-methyltransferase 5 (PRMT5), found in Oryza sativa subsp. japonica (Rice).